The chain runs to 200 residues: Large ribosomal subunit protein uL4 (200 aa).

Residues S42–A69 form a disordered region.

Belongs to the universal ribosomal protein uL4 family. Part of the 50S ribosomal subunit.

One of the primary rRNA binding proteins, this protein initially binds near the 5'-end of the 23S rRNA. It is important during the early stages of 50S assembly. It makes multiple contacts with different domains of the 23S rRNA in the assembled 50S subunit and ribosome. Functionally, forms part of the polypeptide exit tunnel. The protein is Large ribosomal subunit protein uL4 of Alcanivorax borkumensis (strain ATCC 700651 / DSM 11573 / NCIMB 13689 / SK2).